Consider the following 386-residue polypeptide: uncharacterized protein (386 aa).

One can recognise an F-box domain in the interval 29-76 (KYWKFLNEDCKIEVLKYLDYCSRCQLSICSKSDHKLVSITPLYVYEIE).

This is an uncharacterized protein from Caenorhabditis elegans.